The following is a 130-amino-acid chain: Small ribosomal subunit protein uS9 (130 aa).

The tract at residues 105 to 130 is disordered; it reads TRDPRMKERKKYGLHKARKAPQYSKR. The segment covering 111–130 has biased composition (basic residues); it reads KERKKYGLHKARKAPQYSKR.

Belongs to the universal ribosomal protein uS9 family.

The protein is Small ribosomal subunit protein uS9 of Syntrophomonas wolfei subsp. wolfei (strain DSM 2245B / Goettingen).